Consider the following 350-residue polypeptide: Bifunctional UDP-glucose 4-epimerase and UDP-xylose 4-epimerase 1 (350 aa).

NAD(+)-binding positions include 15–17 (GFI), 36–40 (DNFDN), 67–68 (DL), Phe89, and Lys93. Residue Ser133 participates in substrate binding. Catalysis depends on Tyr157, which acts as the Proton acceptor. NAD(+) contacts are provided by Lys161 and Tyr185.

It belongs to the NAD(P)-dependent epimerase/dehydratase family. NAD(+) is required as a cofactor.

The catalysed reaction is UDP-alpha-D-glucose = UDP-alpha-D-galactose. It catalyses the reaction UDP-beta-L-arabinopyranose = UDP-alpha-D-xylose. It participates in carbohydrate metabolism; galactose metabolism. It functions in the pathway nucleotide-sugar biosynthesis; UDP-L-arabinose biosynthesis; UDP-L-arabinose from UDP-alpha-D-xylose: step 1/1. The protein operates within cell wall biogenesis; cell wall polysaccharide biosynthesis. Inhibited by Hg(2+). Its function is as follows. Catalyzes the interconversion between UDP-glucose and UDP-galactose and the interconversion between UDP-arabinose and UDP-xylose. This chain is Bifunctional UDP-glucose 4-epimerase and UDP-xylose 4-epimerase 1, found in Pisum sativum (Garden pea).